The chain runs to 144 residues: Universal stress protein A homolog 1 (144 aa).

The protein belongs to the universal stress protein A family. In terms of assembly, homodimer.

Its subcellular location is the cytoplasm. Functionally, involved in stress response. This chain is Universal stress protein A homolog 1 (uspA1), found in Coxiella burnetii (strain RSA 493 / Nine Mile phase I).